We begin with the raw amino-acid sequence, 344 residues long: MFDLKATIGRLAQGQTLGRQDAWMLFEQMAFGHASHAQLGALLMALRVRGETVEEIVGAALAMRARMVPVKAPADAVDIVGTGGDNAGTYNISTCAAFIVAGAGVPVAKHGNRALSSKSGAADVLSALGVNLDQTPADIERCIAEAGIGFMFAPTHHPALKQLMPVRVDLATRTIFNLLGPLLNPAGVRHHLIGVYSRAWVEPLAHALGDLGSERALVVHGSDGLDEITTVGPTFVSMLARGRVRSFEITPEMVGLVRANPAELKGADGKWNAVALRRVLEGQPGAYRDIALFNAAGGLIAAGVVENWPDAMALARASVDGGAALATLNRLVEASQPEGHVQPY.

Residues Gly-81, 84 to 85 (GD), Thr-89, 91 to 94 (NIST), 109 to 117 (KHGNRALSS), and Ala-121 contribute to the 5-phospho-alpha-D-ribose 1-diphosphate site. Residue Gly-81 participates in anthranilate binding. Ser-93 provides a ligand contact to Mg(2+). Asn-112 is a binding site for anthranilate. Position 167 (Arg-167) interacts with anthranilate. Residues Asp-226 and Glu-227 each coordinate Mg(2+).

The protein belongs to the anthranilate phosphoribosyltransferase family. As to quaternary structure, homodimer. Requires Mg(2+) as cofactor.

The enzyme catalyses N-(5-phospho-beta-D-ribosyl)anthranilate + diphosphate = 5-phospho-alpha-D-ribose 1-diphosphate + anthranilate. It functions in the pathway amino-acid biosynthesis; L-tryptophan biosynthesis; L-tryptophan from chorismate: step 2/5. Catalyzes the transfer of the phosphoribosyl group of 5-phosphorylribose-1-pyrophosphate (PRPP) to anthranilate to yield N-(5'-phosphoribosyl)-anthranilate (PRA). This chain is Anthranilate phosphoribosyltransferase 2, found in Ralstonia nicotianae (strain ATCC BAA-1114 / GMI1000) (Ralstonia solanacearum).